Here is a 150-residue protein sequence, read N- to C-terminus: Large ribosomal subunit protein bL9 (150 aa).

It belongs to the bacterial ribosomal protein bL9 family.

Binds to the 23S rRNA. This Stenotrophomonas maltophilia (strain R551-3) protein is Large ribosomal subunit protein bL9.